The primary structure comprises 208 residues: Ciliary-associated calcium-binding coiled-coil protein 1 (208 aa).

As to expression, testis-specific. Expressed in spermatocytes and round spermatids (at protein level).

Its subcellular location is the cytoplasm. The protein resides in the cytoskeleton. It is found in the microtubule organizing center. It localises to the centrosome. The protein localises to the cell projection. Its subcellular location is the cilium. The protein resides in the flagellum. In terms of biological role, calcium-binding protein. May be involved in the control of sperm flagellar movement. This Mus musculus (Mouse) protein is Ciliary-associated calcium-binding coiled-coil protein 1.